We begin with the raw amino-acid sequence, 302 residues long: Homoserine O-acetyltransferase (302 aa).

Cysteine 142 (acyl-thioester intermediate) is an active-site residue. 2 residues coordinate substrate: lysine 163 and serine 192. Histidine 235 (proton acceptor) is an active-site residue. The active site involves glutamate 237. Arginine 249 is a substrate binding site.

The protein belongs to the MetA family.

The protein localises to the cytoplasm. The enzyme catalyses L-homoserine + acetyl-CoA = O-acetyl-L-homoserine + CoA. It functions in the pathway amino-acid biosynthesis; L-methionine biosynthesis via de novo pathway; O-acetyl-L-homoserine from L-homoserine: step 1/1. Functionally, transfers an acetyl group from acetyl-CoA to L-homoserine, forming acetyl-L-homoserine. In Clostridium novyi (strain NT), this protein is Homoserine O-acetyltransferase.